A 357-amino-acid polypeptide reads, in one-letter code: Holliday junction branch migration complex subunit RuvB (357 aa).

Positions 4 to 195 are large ATPase domain (RuvB-L); the sequence is TDKLAAKAVS…FGIVARLEFY (192 aa). ATP-binding positions include Leu-34, Arg-35, Gly-76, Lys-79, Thr-80, Thr-81, 142–144, Arg-185, Tyr-195, and Arg-232; that span reads EDY. Thr-80 provides a ligand contact to Mg(2+). Positions 196 to 266 are small ATPAse domain (RuvB-S); it reads TPAELAKIVT…VADAALAMLD (71 aa). The interval 269 to 357 is head domain (RuvB-H); it reads AVGFDLMDRK…PVRDLWDDNQ (89 aa). DNA is bound by residues Arg-305, Arg-324, and Arg-329.

The protein belongs to the RuvB family. Homohexamer. Forms an RuvA(8)-RuvB(12)-Holliday junction (HJ) complex. HJ DNA is sandwiched between 2 RuvA tetramers; dsDNA enters through RuvA and exits via RuvB. An RuvB hexamer assembles on each DNA strand where it exits the tetramer. Each RuvB hexamer is contacted by two RuvA subunits (via domain III) on 2 adjacent RuvB subunits; this complex drives branch migration. In the full resolvosome a probable DNA-RuvA(4)-RuvB(12)-RuvC(2) complex forms which resolves the HJ.

It localises to the cytoplasm. It carries out the reaction ATP + H2O = ADP + phosphate + H(+). The RuvA-RuvB-RuvC complex processes Holliday junction (HJ) DNA during genetic recombination and DNA repair, while the RuvA-RuvB complex plays an important role in the rescue of blocked DNA replication forks via replication fork reversal (RFR). RuvA specifically binds to HJ cruciform DNA, conferring on it an open structure. The RuvB hexamer acts as an ATP-dependent pump, pulling dsDNA into and through the RuvAB complex. RuvB forms 2 homohexamers on either side of HJ DNA bound by 1 or 2 RuvA tetramers; 4 subunits per hexamer contact DNA at a time. Coordinated motions by a converter formed by DNA-disengaged RuvB subunits stimulates ATP hydrolysis and nucleotide exchange. Immobilization of the converter enables RuvB to convert the ATP-contained energy into a lever motion, pulling 2 nucleotides of DNA out of the RuvA tetramer per ATP hydrolyzed, thus driving DNA branch migration. The RuvB motors rotate together with the DNA substrate, which together with the progressing nucleotide cycle form the mechanistic basis for DNA recombination by continuous HJ branch migration. Branch migration allows RuvC to scan DNA until it finds its consensus sequence, where it cleaves and resolves cruciform DNA. The chain is Holliday junction branch migration complex subunit RuvB from Ralstonia pickettii (strain 12J).